A 545-amino-acid chain; its full sequence is Chaperonin GroEL 1 (545 aa).

ATP-binding positions include 30-33 (TLGP), lysine 51, 87-91 (DGTTT), glycine 415, and aspartate 495.

This sequence belongs to the chaperonin (HSP60) family. As to quaternary structure, forms a cylinder of 14 subunits composed of two heptameric rings stacked back-to-back. Interacts with the co-chaperonin GroES.

The protein resides in the cytoplasm. It carries out the reaction ATP + H2O + a folded polypeptide = ADP + phosphate + an unfolded polypeptide.. Together with its co-chaperonin GroES, plays an essential role in assisting protein folding. The GroEL-GroES system forms a nano-cage that allows encapsulation of the non-native substrate proteins and provides a physical environment optimized to promote and accelerate protein folding. This chain is Chaperonin GroEL 1, found in Rhizobium meliloti (strain 1021) (Ensifer meliloti).